A 1218-amino-acid polypeptide reads, in one-letter code: MLTKFETKSNRVKGLSFHPRRPWILASLHSGVIQMWDYRMGTLLDRFDEHDGPVRGVHFHATQPLFVSGGDDYKIKVWNYKTHRCLFTLHGHLDYIRTVQFHHECPWIVSASDDQTIRIWNWQSRTCVAVLTGHNHYVMCASFHPKEDLVVSASLDQTVRVWDISALRKKSVSPADDILRLTQMNTDLFGGVDAVVKYVLEGHDRGVNWASFHPTLPLIVSGADDRQVKIWRMNDTKAWEVDTLRGHMNNVSCVMFHAKQDIIVSNSEDKSIRIWDATKRTGIQTFRREHDRFWILSAHPEMNLLAAGHDSGMIVFKLERERPAFSVSGDTVFYVKDRFLRFFEFTTQKEVQLAPIRRPGSVSLNQSPKTLSYSPTENAVLICSDVDGGSYELYIVPKDSAGRADYLQDAKKGAGGSAVFVARNRFAVLEKSSNQVLVRNLKNEIVKKSPLPIATDAIYYAGTGSLLCKAEDRVTIFDLQQRLILGELQAPSVKYVVWSSDMESVALLSKHAVVIANKKLVHRCTLHETIRVKSGAWDENGVFIYTTLNHIKYCLPNGDSGIIKTLDVPIYITRVIGNNIFCLDRDGKNKLVTVDASEYIFKLALLRKRYDHVMSMIKNSQLCGQAVISYLQQKGFPEVALHFVKDEKTRFNLALESGNIQIAVASAKEIDDKDHWYRLGIEALRQGNVGIVEYAYQRTKNFERLAFLYLITGYMDKVGFMCKIAGQNNNLMGQFHNALYLGDAMKRVEILENAGQLPLAYITATTHGLTEIADRLAAELGENIPSLPEGKARSLLIPPAPLTASGDWPLLRVMRGIFEGGLDATGKAELEEDDEAAGADWGDEGLDIVDASEAMANGGDGFDAEEGEANEEDGEEGGWDLEDLELLPEAETPKNAGNARSAVFVAPPPGMPVSLIWTQKSSLAGEHAAAGNFDTAMRLLSRQLGIKNFAPLKPLFLDLHMGSHSYLHALATAPIIPVAVEKGWSESASPNVRGPPALVFTFPQMEDRLKAAYKATTDGKFPEALRQFLSILHTIPLIVVDSRREVDEVKELIEIVREYVLGLRMELKRKELRDDVNRQQELAAYFTNCKLQRVHMRLVLGSAMGLCYKQKNFATAEHFARMLLENNPNEAQARRARQVQQQCSGKKDSSELNYDYRNPFVVCGATYVPIYRGQKDVSCPYCGSRFVPSIEGQLCTICELAVVGADASGLVCSPTQLR.

8 WD repeats span residues threonine 7 to aspartate 48, glutamate 49 to threonine 88, glycine 91 to threonine 132, glycine 133 to valine 172, glycine 202 to valine 241, glycine 246 to threonine 285, arginine 288 to serine 326, and serine 363 to alanine 404. The tract at residues methionine 855–glutamate 876 is disordered. Over residues phenylalanine 862–glutamate 876 the composition is skewed to acidic residues.

In terms of assembly, oligomeric complex that consists of at least the alpha, beta, beta', gamma, delta, epsilon and zeta subunits.

The protein resides in the cytoplasm. It localises to the golgi apparatus membrane. The protein localises to the cytoplasmic vesicle. It is found in the COPI-coated vesicle membrane. The coatomer is a cytosolic protein complex that binds to dilysine motifs and reversibly associates with Golgi non-clathrin-coated vesicles, which further mediate biosynthetic protein transport from the ER, via the Golgi up to the trans Golgi network. Coatomer complex is required for budding from Golgi membranes, and is essential for the retrograde Golgi-to-ER transport of dilysine-tagged proteins. This is Coatomer subunit alpha-2 from Oryza sativa subsp. japonica (Rice).